Here is a 201-residue protein sequence, read N- to C-terminus: Molybdenum cofactor guanylyltransferase (201 aa).

GTP is bound by residues 15–17 (LAG), K28, D74, and D104. D104 provides a ligand contact to Mg(2+).

It belongs to the MobA family. Monomer. It depends on Mg(2+) as a cofactor.

It localises to the cytoplasm. It carries out the reaction Mo-molybdopterin + GTP + H(+) = Mo-molybdopterin guanine dinucleotide + diphosphate. Its function is as follows. Transfers a GMP moiety from GTP to Mo-molybdopterin (Mo-MPT) cofactor (Moco or molybdenum cofactor) to form Mo-molybdopterin guanine dinucleotide (Mo-MGD) cofactor. This Pseudomonas syringae pv. tomato (strain ATCC BAA-871 / DC3000) protein is Molybdenum cofactor guanylyltransferase.